The chain runs to 1441 residues: Envelopment polyprotein (1441 aa).

The first 13 residues, 1-13 (MIRMLVLIVVTAA), serve as a signal peptide directing secretion. Residues 14–200 (SPVYQRCFQD…GSIANSICQN (187 aa)) are Lumenal-facing. The N-linked (GlcNAc...) asparagine; by host glycan is linked to N57. The chain crosses the membrane as a helical span at residues 201–221 (IEIIILVTLTLLIFILLSILS). Residues 222–305 (KTYICYLLMP…RAARVMCKSK (84 aa)) lie on the Cytoplasmic side of the membrane. A helical transmembrane segment spans residues 306–326 (GPASILSIITAVLVLTFVTPI). At 327–365 (NSMVLGESKETFELEELPDDMLEMALRINSYYFTCILNY) the chain is on the lumenal side. Residues 366–386 (AVSWGLIIAGLLVGLIFKKYQ) traverse the membrane as a helical segment. At 387-452 (HRFLNIYAMY…LVQYKAKWMM (66 aa)) the chain is on the cytoplasmic side. Residues 453 to 473 (NFLIIYIFLILIKDSAIVGQA) traverse the membrane as a helical segment. The Lumenal portion of the chain corresponds to 474 to 1395 (TGTDFTTCLE…EPFKNLFGSY (922 aa)). Residues N490 and N1177 are each glycosylated (N-linked (GlcNAc...) asparagine; by host). The chain crosses the membrane as a helical span at residues 1396–1416 (IGIFYTFIISIIALLVIIYVL). At 1417–1441 (LPICFKLRDTLRKHDDAYKREMKIR) the chain is on the cytoplasmic side.

The protein belongs to the orthobunyavirus envelope glycoprotein family. Glycoprotein C and Glycoprotein N interact with each other. Specific enzymatic cleavages in vivo yield mature proteins including nonstructural protein NSm, glycoprotein C, and glycoprotein N.

Its subcellular location is the virion membrane. It localises to the host Golgi apparatus membrane. The protein resides in the host endoplasmic reticulum membrane. In terms of biological role, glycoprotein C and Glycoprotein N interact with each other and are present at the surface of the virion. They are able to attach the virion to a cell receptor and to promote fusion of membranes after endocytosis of the virion. This chain is Envelopment polyprotein (GP), found in Bunyavirus La Crosse.